A 387-amino-acid polypeptide reads, in one-letter code: Succinate--CoA ligase [ADP-forming] subunit beta (387 aa).

The ATP-grasp domain occupies 9–245 (KDLLESYGLK…KSQENAKELK (237 aa)). ATP is bound by residues Lys46, 53–55 (GRG), Glu100, Tyr103, and Glu108. Residues Asn200 and Asp214 each contribute to the Mg(2+) site. Substrate contacts are provided by residues Asn265 and 322–324 (GIV).

It belongs to the succinate/malate CoA ligase beta subunit family. As to quaternary structure, heterotetramer of two alpha and two beta subunits. Mg(2+) is required as a cofactor.

The catalysed reaction is succinate + ATP + CoA = succinyl-CoA + ADP + phosphate. It carries out the reaction GTP + succinate + CoA = succinyl-CoA + GDP + phosphate. The protein operates within carbohydrate metabolism; tricarboxylic acid cycle; succinate from succinyl-CoA (ligase route): step 1/1. Succinyl-CoA synthetase functions in the citric acid cycle (TCA), coupling the hydrolysis of succinyl-CoA to the synthesis of either ATP or GTP and thus represents the only step of substrate-level phosphorylation in the TCA. The beta subunit provides nucleotide specificity of the enzyme and binds the substrate succinate, while the binding sites for coenzyme A and phosphate are found in the alpha subunit. The sequence is that of Succinate--CoA ligase [ADP-forming] subunit beta from Francisella tularensis subsp. novicida (strain U112).